Here is a 398-residue protein sequence, read N- to C-terminus: 1-deoxy-D-xylulose 5-phosphate reductoisomerase (398 aa).

The NADPH site is built by T10, G11, S12, I13, G36, R37, N38, and N124. K125 is a binding site for 1-deoxy-D-xylulose 5-phosphate. Position 126 (E126) interacts with NADPH. D150 serves as a coordination point for Mn(2+). S151, E152, S186, and H209 together coordinate 1-deoxy-D-xylulose 5-phosphate. Position 152 (E152) interacts with Mn(2+). G215 contributes to the NADPH binding site. Positions 222, 227, 228, and 231 each coordinate 1-deoxy-D-xylulose 5-phosphate. E231 lines the Mn(2+) pocket.

This sequence belongs to the DXR family. Homodimer. Requires Mg(2+) as cofactor. The cofactor is Mn(2+).

The enzyme catalyses 2-C-methyl-D-erythritol 4-phosphate + NADP(+) = 1-deoxy-D-xylulose 5-phosphate + NADPH + H(+). It participates in isoprenoid biosynthesis; isopentenyl diphosphate biosynthesis via DXP pathway; isopentenyl diphosphate from 1-deoxy-D-xylulose 5-phosphate: step 1/6. Catalyzes the NADPH-dependent rearrangement and reduction of 1-deoxy-D-xylulose-5-phosphate (DXP) to 2-C-methyl-D-erythritol 4-phosphate (MEP). This Yersinia pseudotuberculosis serotype O:1b (strain IP 31758) protein is 1-deoxy-D-xylulose 5-phosphate reductoisomerase.